A 659-amino-acid chain; its full sequence is DNA ligase (659 aa).

NAD(+)-binding positions include 32-36, 81-82, and Glu-110; these read DQQYD and SL. Lys-112 (N6-AMP-lysine intermediate) is an active-site residue. NAD(+) is bound by residues Arg-133, Glu-167, Lys-282, and Lys-306. Positions 399, 402, 415, and 420 each coordinate Zn(2+). The BRCT domain occupies 582-659; that stretch reads IKNNIFKNKK…QEHEFEELIK (78 aa).

It belongs to the NAD-dependent DNA ligase family. LigA subfamily. Requires Mg(2+) as cofactor. The cofactor is Mn(2+).

The catalysed reaction is NAD(+) + (deoxyribonucleotide)n-3'-hydroxyl + 5'-phospho-(deoxyribonucleotide)m = (deoxyribonucleotide)n+m + AMP + beta-nicotinamide D-nucleotide.. Functionally, DNA ligase that catalyzes the formation of phosphodiester linkages between 5'-phosphoryl and 3'-hydroxyl groups in double-stranded DNA using NAD as a coenzyme and as the energy source for the reaction. It is essential for DNA replication and repair of damaged DNA. The chain is DNA ligase from Phytoplasma mali (strain AT).